The following is a 716-amino-acid chain: ATP-dependent zinc metalloprotease FTSH 1, chloroplastic (716 aa).

Residues M1–R48 constitute a chloroplast transit peptide. Residues S49–A86 constitute a thylakoid transit peptide. A helical transmembrane segment spans residues F204–F224. G302 to T309 is an ATP binding site. A Zn(2+)-binding site is contributed by H524. Residue E525 is part of the active site. Residues H528 and D605 each coordinate Zn(2+).

In the N-terminal section; belongs to the AAA ATPase family. It in the C-terminal section; belongs to the peptidase M41 family. As to quaternary structure, interacts with CHIP and HSP70. Heterohexamers with FTSH2, FTSH5 and FTSH8. Zn(2+) is required as a cofactor. Post-translationally, the FTSH1 precursor is ubiquitinated by CHIP in the cytoplasm. In terms of tissue distribution, ubiquitous.

The protein localises to the plastid. The protein resides in the chloroplast thylakoid membrane. Functionally, part of a complex that function as an ATP-dependent zinc metallopeptidase. Involved in the thylakoid formation and in the removal of damaged D1 in the photosystem II, preventing cell death under high-intensity light conditions. The protein is ATP-dependent zinc metalloprotease FTSH 1, chloroplastic (FTSH1) of Arabidopsis thaliana (Mouse-ear cress).